Reading from the N-terminus, the 362-residue chain is 3-dehydroquinate synthase (362 aa).

NAD(+) contacts are provided by residues 73 to 78, 107 to 111, 131 to 132, Lys144, Lys153, and 171 to 174; these read DAEAGK, GAATD, TT, and TLQT. Positions 186, 249, and 265 each coordinate Zn(2+).

Belongs to the sugar phosphate cyclases superfamily. Dehydroquinate synthase family. NAD(+) is required as a cofactor. Co(2+) serves as cofactor. The cofactor is Zn(2+).

It is found in the cytoplasm. It carries out the reaction 7-phospho-2-dehydro-3-deoxy-D-arabino-heptonate = 3-dehydroquinate + phosphate. It functions in the pathway metabolic intermediate biosynthesis; chorismate biosynthesis; chorismate from D-erythrose 4-phosphate and phosphoenolpyruvate: step 2/7. Its function is as follows. Catalyzes the conversion of 3-deoxy-D-arabino-heptulosonate 7-phosphate (DAHP) to dehydroquinate (DHQ). The protein is 3-dehydroquinate synthase of Mycobacterium bovis (strain ATCC BAA-935 / AF2122/97).